The chain runs to 289 residues: uncharacterized protein (289 aa).

This is an uncharacterized protein from Schizosaccharomyces pombe (strain 972 / ATCC 24843) (Fission yeast).